A 183-amino-acid chain; its full sequence is MIKLFSLKQQKKEEESAGGTKGSSKKASAAQLRIQKDITELNLPKTCEIEFSDHDDLLNFKLVICPDEGFYKGGKFVFSFKVGQGYPHDPPKVKCETMVYHPNIDLEGNVCLNILREDWKPVLTINSIIYGLQYLFLEPNPEDPLNKEAAEVLQNNRRLFEQNVQRSMRGGYIGSTYFERCLK.

Position 1 is an N-acetylmethionine (Met-1). Positions Met-1–Ser-28 are disordered. The UBC core domain occupies Ala-29–Ile-173. Residue Cys-111 is the Glycyl thioester intermediate of the active site.

It belongs to the ubiquitin-conjugating enzyme family. UBC12 subfamily. The acetylation of Met-1 increases affinity for DCUN1D1 by about 2 orders of magnitude and is crucial for NEDD8 transfer to cullins.

The enzyme catalyses [E1 NEDD8-activating enzyme]-S-[NEDD8 protein]-yl-L-cysteine + [E2 NEDD8-conjugating enzyme]-L-cysteine = [E1 NEDD8-activating enzyme]-L-cysteine + [E2 NEDD8-conjugating enzyme]-S-[NEDD8-protein]-yl-L-cysteine.. The protein operates within protein modification; protein neddylation. Its function is as follows. Accepts the ubiquitin-like protein NEDD8 from the UBA3-NAE1 E1 complex and catalyzes its covalent attachment to other proteins. The specific interaction with the E3 ubiquitin ligase rbx1, but not rbx2, suggests that the rbx1-ube2m complex neddylates specific target proteins, such as cul1, cul2, cul3 and cul4. Involved in cell proliferation. This is NEDD8-conjugating enzyme Ubc12 (ube2m) from Xenopus laevis (African clawed frog).